We begin with the raw amino-acid sequence, 463 residues long: Increased DNA methylation 3 (463 aa).

The span at 169–182 (NLDESRETEQDCSR) shows a compositional bias: basic and acidic residues. 2 disordered regions span residues 169–199 (NLDE…DYNS) and 300–347 (RRFK…TTGT). Residues 184–199 (GDATANGVVTNEDYNS) are compositionally biased toward polar residues. Over residues 300–310 (RRFKNSSKKAT) the composition is skewed to basic residues.

In terms of assembly, interacts with MBD7 (via C-terminus), IDM1 and IDM2. Part of a complex made of MBD7, IDM1, IDM2 and IDM3.

The protein resides in the nucleus. Functionally, acts as an anti-silencing factor that prevents DNA hypermethylation and gene repression. This Arabidopsis thaliana (Mouse-ear cress) protein is Increased DNA methylation 3.